A 511-amino-acid polypeptide reads, in one-letter code: Glucans biosynthesis protein G (511 aa).

A signal peptide spans 1–22 (MMKMRWLSAAVMLTLYTSSSWA).

The protein belongs to the OpgD/OpgG family.

It localises to the periplasm. Its pathway is glycan metabolism; osmoregulated periplasmic glucan (OPG) biosynthesis. Its function is as follows. Involved in the biosynthesis of osmoregulated periplasmic glucans (OPGs). This is Glucans biosynthesis protein G from Shigella dysenteriae serotype 1 (strain Sd197).